The chain runs to 102 residues: Integration host factor subunit alpha (102 aa).

It belongs to the bacterial histone-like protein family. In terms of assembly, heterodimer of an alpha and a beta chain.

In terms of biological role, this protein is one of the two subunits of integration host factor, a specific DNA-binding protein that functions in genetic recombination as well as in transcriptional and translational control. This Chromohalobacter salexigens (strain ATCC BAA-138 / DSM 3043 / CIP 106854 / NCIMB 13768 / 1H11) protein is Integration host factor subunit alpha.